The chain runs to 241 residues: MAYVFEQMEATDYEKVNTKLKNRDSLDILRWANQTYGEKLVYACSFGAEAMVLLDLLSKIQKEAHILFLDTDFHFAETYELIERVKERYPTFRINMAKPALSPEEQAERYGDELWLKNPDQCCQIRKLDVLARELEPYDAWLSGLRREQSPTRANTEFVNQDKRFKKVKVCPLIHWTEEEIWMYIKLHQLPYNELHDQHYPSIGCTYCTKAVMPGEDARSGRWAGTGKTECGLHAPTKGDS.

Residues C122, C123, C205, and C208 each coordinate [4Fe-4S] cluster. Catalysis depends on C231, which acts as the Nucleophile; cysteine thiosulfonate intermediate.

It belongs to the PAPS reductase family. CysH subfamily. [4Fe-4S] cluster is required as a cofactor.

The protein resides in the cytoplasm. It carries out the reaction [thioredoxin]-disulfide + sulfite + AMP + 2 H(+) = adenosine 5'-phosphosulfate + [thioredoxin]-dithiol. It functions in the pathway sulfur metabolism; hydrogen sulfide biosynthesis; sulfite from sulfate. Catalyzes the formation of sulfite from adenosine 5'-phosphosulfate (APS) using thioredoxin as an electron donor. The chain is Adenosine 5'-phosphosulfate reductase from Shouchella clausii (strain KSM-K16) (Alkalihalobacillus clausii).